A 255-amino-acid polypeptide reads, in one-letter code: Thiazole synthase (255 aa).

Lysine 96 (schiff-base intermediate with DXP) is an active-site residue. Residues glycine 157, 183-184 (AG), and 205-206 (NT) contribute to the 1-deoxy-D-xylulose 5-phosphate site.

The protein belongs to the ThiG family. In terms of assembly, homotetramer. Forms heterodimers with either ThiH or ThiS.

Its subcellular location is the cytoplasm. The enzyme catalyses [ThiS sulfur-carrier protein]-C-terminal-Gly-aminoethanethioate + 2-iminoacetate + 1-deoxy-D-xylulose 5-phosphate = [ThiS sulfur-carrier protein]-C-terminal Gly-Gly + 2-[(2R,5Z)-2-carboxy-4-methylthiazol-5(2H)-ylidene]ethyl phosphate + 2 H2O + H(+). Its pathway is cofactor biosynthesis; thiamine diphosphate biosynthesis. Functionally, catalyzes the rearrangement of 1-deoxy-D-xylulose 5-phosphate (DXP) to produce the thiazole phosphate moiety of thiamine. Sulfur is provided by the thiocarboxylate moiety of the carrier protein ThiS. In vitro, sulfur can be provided by H(2)S. The protein is Thiazole synthase of Staphylococcus saprophyticus subsp. saprophyticus (strain ATCC 15305 / DSM 20229 / NCIMB 8711 / NCTC 7292 / S-41).